Consider the following 690-residue polypeptide: Eukaryotic translation initiation factor 3 subunit B (690 aa).

Residues 1–11 (MAKKKSEEHSG) show a composition bias toward basic and acidic residues. A disordered region spans residues 1–36 (MAKKKSEEHSGADANDSDYQEEPNFEDPPGFVDNIS). The span at 15-25 (NDSDYQEEPNF) shows a compositional bias: acidic residues. Residues 57-141 (SVVVVDNIPK…HTFAVNLFTD (85 aa)) enclose the RRM domain. WD repeat units follow at residues 207 to 246 (TRER…KIQK), 293 to 331 (DGMS…LLDL), 334 to 369 (IKIP…TLME), 442 to 484 (EIRE…KPSL), and 530 to 575 (PDHF…IKRT). The stretch at 595-645 (EEKQKEIKKNLKKYYAAFEQKDRLRLTRASKELLEKRSQLRETFMEYRNKR) forms a coiled coil.

This sequence belongs to the eIF-3 subunit B family. In terms of assembly, component of the eukaryotic translation initiation factor 3 (eIF-3) complex. The eIF-3 complex interacts with pix. Interacts with mxt.

The protein localises to the cytoplasm. In terms of biological role, RNA-binding component of the eukaryotic translation initiation factor 3 (eIF-3) complex, which is involved in protein synthesis of a specialized repertoire of mRNAs and, together with other initiation factors, stimulates binding of mRNA and methionyl-tRNAi to the 40S ribosome. The eIF-3 complex specifically targets and initiates translation of a subset of mRNAs involved in cell proliferation. In Drosophila yakuba (Fruit fly), this protein is Eukaryotic translation initiation factor 3 subunit B.